A 162-amino-acid chain; its full sequence is uncharacterized protein (162 aa).

This is an uncharacterized protein from Bacillus subtilis (strain 168).